The sequence spans 370 residues: Protein-tyrosine sulfotransferase 1 (370 aa).

At 1 to 8 (MVGKLKQN) the chain is on the cytoplasmic side. A helical; Signal-anchor for type II membrane protein membrane pass occupies residues 9 to 25 (LLLACLVISSVTVFYLG). At 26–370 (QHAMECHHRI…KEKPQTEQVE (345 aa)) the chain is on the lumenal side. N-linked (GlcNAc...) asparagine glycosylation is present at asparagine 60. 3'-phosphoadenylyl sulfate is bound at residue 79–83 (RSGTT). An intrachain disulfide couples cysteine 97 to cysteine 157. Catalysis depends on glutamate 100, which acts as the Proton donor/acceptor. Residues 102–106 (RVIPR) are interaction with peptide substrate. 3 residues coordinate 3'-phosphoadenylyl sulfate: arginine 184, serine 192, and arginine 196. Cysteine 226 and cysteine 234 are joined by a disulfide. Tyrosine 239 lines the 3'-phosphoadenylyl sulfate pocket. The N-linked (GlcNAc...) asparagine glycan is linked to asparagine 262. Residues 286–295 (STDQVIKPVN) and lysine 301 contribute to the 3'-phosphoadenylyl sulfate site.

The protein belongs to the protein sulfotransferase family. In terms of assembly, homodimer. Can also form heterodimers with TPST2. In terms of processing, N-glycosylated. As to expression, ubiquitous. Detected in heart, brain, placenta, lung, liver, skeletal muscle, kidney and pancreas.

The protein resides in the golgi apparatus membrane. It carries out the reaction L-tyrosyl-[protein] + 3'-phosphoadenylyl sulfate = O-sulfo-L-tyrosine-[protein] + adenosine 3',5'-bisphosphate + H(+). In terms of biological role, catalyzes the O-sulfation of tyrosine residues within acidic motifs of polypeptides, using 3'-phosphoadenylyl sulfate (PAPS) as cosubstrate. In Homo sapiens (Human), this protein is Protein-tyrosine sulfotransferase 1 (TPST1).